We begin with the raw amino-acid sequence, 236 residues long: Large ribosomal subunit protein uL1 (236 aa).

It belongs to the universal ribosomal protein uL1 family. As to quaternary structure, part of the 50S ribosomal subunit.

Binds directly to 23S rRNA. The L1 stalk is quite mobile in the ribosome, and is involved in E site tRNA release. Functionally, protein L1 is also a translational repressor protein, it controls the translation of the L11 operon by binding to its mRNA. In Kocuria rhizophila (strain ATCC 9341 / DSM 348 / NBRC 103217 / DC2201), this protein is Large ribosomal subunit protein uL1.